Reading from the N-terminus, the 90-residue chain is Probable Fe(2+)-trafficking protein (90 aa).

This sequence belongs to the Fe(2+)-trafficking protein family.

Could be a mediator in iron transactions between iron acquisition and iron-requiring processes, such as synthesis and/or repair of Fe-S clusters in biosynthetic enzymes. The sequence is that of Probable Fe(2+)-trafficking protein from Pseudoalteromonas atlantica (strain T6c / ATCC BAA-1087).